Consider the following 228-residue polypeptide: Cytochrome c oxidase subunit 2 (228 aa).

At M1 to H26 the chain is on the mitochondrial intermembrane side. The chain crosses the membrane as a helical span at residues T27–F47. At N48–T60 the chain is on the mitochondrial matrix side. Residues I61–L81 form a helical membrane-spanning segment. The Mitochondrial intermembrane portion of the chain corresponds to R82–N228. 6 residues coordinate Cu cation: H161, C196, E198, C200, H204, and M207. E198 serves as a coordination point for Mg(2+).

It belongs to the cytochrome c oxidase subunit 2 family. As to quaternary structure, component of the cytochrome c oxidase (complex IV, CIV), a multisubunit enzyme composed of a catalytic core of 3 subunits and several supernumerary subunits. The complex exists as a monomer or a dimer and forms supercomplexes (SCs) in the inner mitochondrial membrane with ubiquinol-cytochrome c oxidoreductase (cytochrome b-c1 complex, complex III, CIII). It depends on Cu cation as a cofactor.

The protein localises to the mitochondrion inner membrane. It carries out the reaction 4 Fe(II)-[cytochrome c] + O2 + 8 H(+)(in) = 4 Fe(III)-[cytochrome c] + 2 H2O + 4 H(+)(out). Component of the cytochrome c oxidase, the last enzyme in the mitochondrial electron transport chain which drives oxidative phosphorylation. The respiratory chain contains 3 multisubunit complexes succinate dehydrogenase (complex II, CII), ubiquinol-cytochrome c oxidoreductase (cytochrome b-c1 complex, complex III, CIII) and cytochrome c oxidase (complex IV, CIV), that cooperate to transfer electrons derived from NADH and succinate to molecular oxygen, creating an electrochemical gradient over the inner membrane that drives transmembrane transport and the ATP synthase. Cytochrome c oxidase is the component of the respiratory chain that catalyzes the reduction of oxygen to water. Electrons originating from reduced cytochrome c in the intermembrane space (IMS) are transferred via the dinuclear copper A center (CU(A)) of subunit 2 and heme A of subunit 1 to the active site in subunit 1, a binuclear center (BNC) formed by heme A3 and copper B (CU(B)). The BNC reduces molecular oxygen to 2 water molecules using 4 electrons from cytochrome c in the IMS and 4 protons from the mitochondrial matrix. This chain is Cytochrome c oxidase subunit 2 (COXII), found in Anopheles quadrimaculatus (Common malaria mosquito).